The chain runs to 506 residues: Probable lipid II flippase MurJ (506 aa).

13 helical membrane passes run tyrosine 4–valine 24, threonine 86–alanine 106, valine 127–valine 147, isoleucine 153–phenylalanine 173, isoleucine 181–alanine 201, isoleucine 232–leucine 252, alanine 263–phenylalanine 283, isoleucine 308–leucine 328, threonine 345–phenylalanine 365, threonine 377–isoleucine 397, leucine 405–leucine 425, isoleucine 436–phenylalanine 456, and leucine 474–isoleucine 494.

Belongs to the MurJ/MviN family.

It is found in the cell inner membrane. Its pathway is cell wall biogenesis; peptidoglycan biosynthesis. Functionally, involved in peptidoglycan biosynthesis. Transports lipid-linked peptidoglycan precursors from the inner to the outer leaflet of the cytoplasmic membrane. The polypeptide is Probable lipid II flippase MurJ (Borreliella burgdorferi (strain ATCC 35210 / DSM 4680 / CIP 102532 / B31) (Borrelia burgdorferi)).